We begin with the raw amino-acid sequence, 544 residues long: Probable protein kinase UbiB (544 aa).

In terms of domain architecture, Protein kinase spans 123–501 (DFDIKPLASA…KRQQAKGQFL (379 aa)). Residues 129-137 (LASASIAQV) and Lys-152 each bind ATP. Asp-287 acts as the Proton acceptor in catalysis. Residues 515 to 537 (LLTSNITVLASISAATGAAFWLF) form a helical membrane-spanning segment.

It belongs to the ABC1 family. UbiB subfamily.

It is found in the cell inner membrane. It participates in cofactor biosynthesis; ubiquinone biosynthesis [regulation]. Is probably a protein kinase regulator of UbiI activity which is involved in aerobic coenzyme Q (ubiquinone) biosynthesis. This Aliivibrio fischeri (strain MJ11) (Vibrio fischeri) protein is Probable protein kinase UbiB.